We begin with the raw amino-acid sequence, 351 residues long: MKLSDFDFDLPEDLIATRPAVPRTSARLLVAKGRQISDSIVSDLPNWLSPGDRLVLNDTRVIPARLTGARHRDTAQGPMQARIEVTLLEPDAQGNWSALIKPLKKVKIAEEIIFSDRLRATLRAVKDGQGVLQFNLEGDDFDAALNAAGAMPLPPYIATRRPADERDKSDYQTVFAQNSGAVAAPTASLHFDKALLSELAARGVLFSYVTLHVGAGTFLPVKVEDVTTHKMHAEWGQVSAAAAAEINATKQAGKRVIPVGTTALRLIETAGREGQIKAWEGDTDIFIYPGFRFNVADALMTNFHLPKSTLMMLVSALMGYDEVRAIYDHAVAEKYRFFSYGDASLLIPQRD.

Belongs to the QueA family. Monomer.

The protein localises to the cytoplasm. It catalyses the reaction 7-aminomethyl-7-carbaguanosine(34) in tRNA + S-adenosyl-L-methionine = epoxyqueuosine(34) in tRNA + adenine + L-methionine + 2 H(+). Its pathway is tRNA modification; tRNA-queuosine biosynthesis. Functionally, transfers and isomerizes the ribose moiety from AdoMet to the 7-aminomethyl group of 7-deazaguanine (preQ1-tRNA) to give epoxyqueuosine (oQ-tRNA). The protein is S-adenosylmethionine:tRNA ribosyltransferase-isomerase of Roseobacter denitrificans (strain ATCC 33942 / OCh 114) (Erythrobacter sp. (strain OCh 114)).